Consider the following 113-residue polypeptide: Protein S100-A9 (113 aa).

Ala-2 carries the N-acetylalanine modification. 2 EF-hand domains span residues 13–48 and 55–90; these read ISTI…DLPN and RNEN…LIFA. His-21 is a binding site for Zn(2+). 2 residues coordinate Ca(2+): Ser-24 and His-29. Asp-31 provides a ligand contact to Zn(2+). Ca(2+) contacts are provided by Thr-32, Glu-37, Asp-68, Asn-70, Asp-72, Gln-74, and Glu-79. 2 residues coordinate Zn(2+): His-92 and His-96. Pros-methylhistidine is present on His-107.

In terms of assembly, homodimer. Preferentially exists as a heterodimer or heterotetramer with S100A8 known as calprotectin (S100A8/A9). S100A9 interacts with ATP2A2. S100A9 interacts with AGER, and with the heterodimeric complex formed by TLR4 and LY96 in the presence of calcium and/or zinc ions. S100A9 binds quinoline-3-carboxamides in the presence of calcium and/or zinc ions. S100A9 interacts with amyloid-beta protein 40. Calprotectin (S100A8/9) interacts with CEACAM3 and tubulin filaments in a calcium-dependent manner. Heterotetrameric calprotectin (S100A8/A9) interacts with ANXA6 and associates with tubulin filaments in activated monocytes. Calprotectin (S100A8/9) interacts with NCF2/P67PHOX, RAC1, RAC2, CYBA and CYBB. Calprotectin (S100A8/9) interacts with NOS2 to form the iNOS-S100A8/A9 transnitrosylase complex; induced by LDL(ox). Calprotectin (S100A8/9) interacts with CD69. Phosphorylated. Phosphorylation inhibits activation of tubulin polymerization. In terms of processing, methylation at His-107 by METTL9 reduces zinc-binding without affecting heterodimerization with S100A8. As to expression, highly expressed at sites of inflammation.

Its subcellular location is the secreted. It is found in the cytoplasm. The protein localises to the cytoskeleton. The protein resides in the cell membrane. S100A9 is a calcium- and zinc-binding protein which plays a prominent role in the regulation of inflammatory processes and immune response. It can induce neutrophil chemotaxis, adhesion, can increase the bactericidal activity of neutrophils by promoting phagocytosis via activation of SYK, PI3K/AKT, and ERK1/2 and can induce degranulation of neutrophils by a MAPK-dependent mechanism. Predominantly found as calprotectin (S100A8/A9) which has a wide plethora of intra- and extracellular functions. The intracellular functions include: facilitating leukocyte arachidonic acid trafficking and metabolism, modulation of the tubulin-dependent cytoskeleton during migration of phagocytes and activation of the neutrophilic NADPH-oxidase. Also participates in regulatory T-cell differentiation together with CD69. Activates NADPH-oxidase by facilitating the enzyme complex assembly at the cell membrane, transferring arachidonic acid, an essential cofactor, to the enzyme complex and S100A8 contributes to the enzyme assembly by directly binding to NCF2/P67PHOX. The extracellular functions involve pro-inflammatory, antimicrobial, oxidant-scavenging and apoptosis-inducing activities. Its pro-inflammatory activity includes recruitment of leukocytes, promotion of cytokine and chemokine production, and regulation of leukocyte adhesion and migration. Acts as an alarmin or a danger associated molecular pattern (DAMP) molecule and stimulates innate immune cells via binding to pattern recognition receptors such as Toll-like receptor 4 (TLR4) and receptor for advanced glycation endproducts (AGER). Binding to TLR4 and AGER activates the MAP-kinase and NF-kappa-B signaling pathways resulting in the amplification of the pro-inflammatory cascade. Has antimicrobial activity towards bacteria and fungi and exerts its antimicrobial activity probably via chelation of Zn(2+) which is essential for microbial growth. Can induce cell death via autophagy and apoptosis and this occurs through the cross-talk of mitochondria and lysosomes via reactive oxygen species (ROS) and the process involves BNIP3. Can regulate neutrophil number and apoptosis by an anti-apoptotic effect; regulates cell survival via ITGAM/ITGB and TLR4 and a signaling mechanism involving MEK-ERK. Its role as an oxidant scavenger has a protective role in preventing exaggerated tissue damage by scavenging oxidants. The iNOS-S100A8/A9 transnitrosylase complex is proposed to direct selective inflammatory stimulus-dependent S-nitrosylation of multiple targets such as GAPDH, NXA5, EZR, MSN and VIM by recognizing a [IL]-x-C-x-x-[DE] motif. This Rattus norvegicus (Rat) protein is Protein S100-A9 (S100a9).